The primary structure comprises 238 residues: N-terminal acetyltransferase A complex catalytic subunit ARD1 (238 aa).

Residues 35-195 (YHILSWPEAS…DAYAMKKVLK (161 aa)) form the N-acetyltransferase domain.

It belongs to the acetyltransferase family. ARD1 subfamily. In terms of assembly, component of the N-terminal acetyltransferase A (NatA) complex, which is composed of ARD1, NAT1 and NAT5. Can self-associate.

Its subcellular location is the cytoplasm. The catalysed reaction is N-terminal glycyl-[protein] + acetyl-CoA = N-terminal N(alpha)-acetylglycyl-[protein] + CoA + H(+). It catalyses the reaction N-terminal L-alanyl-[protein] + acetyl-CoA = N-terminal N(alpha)-acetyl-L-alanyl-[protein] + CoA + H(+). The enzyme catalyses N-terminal L-seryl-[protein] + acetyl-CoA = N-terminal N(alpha)-acetyl-L-seryl-[protein] + CoA + H(+). It carries out the reaction N-terminal L-valyl-[protein] + acetyl-CoA = N-terminal N(alpha)-acetyl-L-valyl-[protein] + CoA + H(+). The catalysed reaction is N-terminal L-cysteinyl-[protein] + acetyl-CoA = N-terminal N(alpha)-acetyl-L-cysteinyl-[protein] + CoA + H(+). It catalyses the reaction N-terminal L-threonyl-[protein] + acetyl-CoA = N-terminal N(alpha)-acetyl-L-threonyl-[protein] + CoA + H(+). Its function is as follows. Catalytic component of the NatA N-terminal acetyltransferase, which catalyzes acetylation of proteins beginning with Met-Ser, Met-Gly and Met-Ala. N-acetylation plays a role in normal eukaryotic translation and processing, protect against proteolytic degradation and protein turnover. The sequence is that of N-terminal acetyltransferase A complex catalytic subunit ARD1 (ARD1) from Saccharomyces cerevisiae (strain ATCC 204508 / S288c) (Baker's yeast).